Here is a 538-residue protein sequence, read N- to C-terminus: Cytochrome P450 734A4 (538 aa).

Residues 5–27 form a helical membrane-spanning segment; that stretch reads VAVAAAVLLLLHVAARVADAVWW. Cys-480 provides a ligand contact to heme.

This sequence belongs to the cytochrome P450 family. The cofactor is heme. Expressed in roots, shoot apex, leaf sheaths, leaf blades, internodes and panicles.

Its subcellular location is the membrane. Cytochrome P450 involved in brassinosteroids (BRs) inactivation and regulation of BRs homeostasis. Is a multifunctional and multisubstrate enzyme that controls the endogenous bioactive BR content both by direct inactivation of castasterone (CS) and by decreasing the levels of BR precursors. Catalyzes the oxidation of carbon 22 hydroxylated BR intermediates to produce C26 oxidized metabolites. This chain is Cytochrome P450 734A4 (CYP734A4), found in Oryza sativa subsp. japonica (Rice).